The primary structure comprises 554 residues: NADH-ubiquinone oxidoreductase chain 5 (554 aa).

The next 15 helical transmembrane spans lie at 6–26 (VCGI…LYLL), 57–77 (LMFI…SISY), 93–113 (ILFL…SIIL), 150–170 (IGLL…LSFY), 175–197 (FMMI…STWL), 209–228 (SLVH…IRYV), 238–258 (YIML…NFEL), 263–283 (VVAY…SIGS), 286–306 (LVFL…MCVG), 332–352 (SMIL…VGYY), 379–399 (IFTV…FLMM), 409–429 (IMCI…KLIF), 441–461 (LLMI…IMGF), 480–500 (FLFM…MMFT), and 532–552 (LMIN…IYLI).

It belongs to the complex I subunit 5 family.

The protein localises to the mitochondrion inner membrane. It catalyses the reaction a ubiquinone + NADH + 5 H(+)(in) = a ubiquinol + NAD(+) + 4 H(+)(out). Functionally, core subunit of the mitochondrial membrane respiratory chain NADH dehydrogenase (Complex I) that is believed to belong to the minimal assembly required for catalysis. Complex I functions in the transfer of electrons from NADH to the respiratory chain. The immediate electron acceptor for the enzyme is believed to be ubiquinone. This chain is NADH-ubiquinone oxidoreductase chain 5 (ND5), found in Apis mellifera ligustica (Common honeybee).